The chain runs to 174 residues: Zinc finger AN1 domain-containing stress-associated protein 15 (174 aa).

The tract at residues 1–61 is disordered; it reads MAQESCDLNK…TPPAAAAAAS (61 aa). Residues 18-41 show a composition bias toward low complexity; the sequence is PSSSSSPSPSPTTASPSPPTAQMT. Pro residues predominate over residues 42 to 54; it reads EPPPPQSTPPTPP. The segment at 109–155 adopts an AN1-type zinc-finger fold; sequence VLFVNRCNVCRKRVGLTGFRCRCGELFCPRHRHSETHECSFDYKTAG. Residues Cys115, Cys118, Cys129, Cys131, Cys136, His139, His145, and Cys147 each coordinate Zn(2+).

Its function is as follows. May be involved in environmental stress response. The chain is Zinc finger AN1 domain-containing stress-associated protein 15 (SAP15) from Oryza sativa subsp. japonica (Rice).